A 257-amino-acid polypeptide reads, in one-letter code: Phycoerythrobilin:ferredoxin oxidoreductase (257 aa).

Belongs to the HY2 family.

The catalysed reaction is (3Z)-phycoerythrobilin + oxidized 2[4Fe-4S]-[ferredoxin] = 15,16-dihydrobiliverdin + reduced 2[4Fe-4S]-[ferredoxin] + 2 H(+). Its function is as follows. Catalyzes the two-electron reduction of the C2 and C3(1) diene system of 15,16-dihydrobiliverdin. The polypeptide is Phycoerythrobilin:ferredoxin oxidoreductase (Prochlorococcus marinus (strain MIT 9211)).